We begin with the raw amino-acid sequence, 396 residues long: MSDTLLNPYFGEFGGMYVPEILVPVLKQLEEAFVAAQNDPLFQAEFTDLLKNYAGRPTALTLCRNLTKGSKTKLYLKREDLLHGGAHKTNQVLGQALLAKRMGKTRIIAETGAGQHGVATALACAMLDLPCVIYMGAKDVERQSPNVFRMRLMGAEVIPVQKGSCSLKDACCEAMRDWAANYETTHYLIGTAAGPHPFPTMVREFQKMIGEETKRQILEKENRLPDAVIAAVGGGSNAIGMFADFIEEKSVQLIGVEPAGKGIETGEHGAPLKHGTTGIYFGMKSPIMQTKDGQIEESYSISAGLDFPSVGPQHAYLNSIGRAEYVSITDQEALDAFQALAQHEGIIPALESSHALAYALKLIAQNPDKEQLLVVNLSGRGDKDIFTVDKILNGGN.

Lys-88 carries the N6-(pyridoxal phosphate)lysine modification.

Belongs to the TrpB family. In terms of assembly, tetramer of two alpha and two beta chains. It depends on pyridoxal 5'-phosphate as a cofactor.

It catalyses the reaction (1S,2R)-1-C-(indol-3-yl)glycerol 3-phosphate + L-serine = D-glyceraldehyde 3-phosphate + L-tryptophan + H2O. It participates in amino-acid biosynthesis; L-tryptophan biosynthesis; L-tryptophan from chorismate: step 5/5. The beta subunit is responsible for the synthesis of L-tryptophan from indole and L-serine. The protein is Tryptophan synthase beta chain of Actinobacillus pleuropneumoniae serotype 5b (strain L20).